The chain runs to 134 residues: Phosphoribosyl-AMP cyclohydrolase (134 aa).

Asp77 contacts Mg(2+). Residue Cys78 coordinates Zn(2+). The Mg(2+) site is built by Asp79 and Asp81. The Zn(2+) site is built by Cys95 and Cys102.

The protein belongs to the PRA-CH family. In terms of assembly, homodimer. It depends on Mg(2+) as a cofactor. Zn(2+) is required as a cofactor.

The protein resides in the cytoplasm. It carries out the reaction 1-(5-phospho-beta-D-ribosyl)-5'-AMP + H2O = 1-(5-phospho-beta-D-ribosyl)-5-[(5-phospho-beta-D-ribosylamino)methylideneamino]imidazole-4-carboxamide. It functions in the pathway amino-acid biosynthesis; L-histidine biosynthesis; L-histidine from 5-phospho-alpha-D-ribose 1-diphosphate: step 3/9. Functionally, catalyzes the hydrolysis of the adenine ring of phosphoribosyl-AMP. This Pseudomonas paraeruginosa (strain DSM 24068 / PA7) (Pseudomonas aeruginosa (strain PA7)) protein is Phosphoribosyl-AMP cyclohydrolase.